The sequence spans 254 residues: Pyridoxine 5'-phosphate synthase (254 aa).

Position 12 (asparagine 12) interacts with 3-amino-2-oxopropyl phosphate. 14–15 is a 1-deoxy-D-xylulose 5-phosphate binding site; that stretch reads DH. Position 23 (arginine 23) interacts with 3-amino-2-oxopropyl phosphate. Histidine 48 serves as the catalytic Proton acceptor. Residues arginine 50 and histidine 55 each coordinate 1-deoxy-D-xylulose 5-phosphate. Glutamate 75 acts as the Proton acceptor in catalysis. Threonine 105 is a 1-deoxy-D-xylulose 5-phosphate binding site. The Proton donor role is filled by histidine 199. 3-amino-2-oxopropyl phosphate-binding positions include glycine 200 and 221-222; that span reads GF.

It belongs to the PNP synthase family. Homooctamer; tetramer of dimers.

It localises to the cytoplasm. It catalyses the reaction 3-amino-2-oxopropyl phosphate + 1-deoxy-D-xylulose 5-phosphate = pyridoxine 5'-phosphate + phosphate + 2 H2O + H(+). Its pathway is cofactor biosynthesis; pyridoxine 5'-phosphate biosynthesis; pyridoxine 5'-phosphate from D-erythrose 4-phosphate: step 5/5. In terms of biological role, catalyzes the complicated ring closure reaction between the two acyclic compounds 1-deoxy-D-xylulose-5-phosphate (DXP) and 3-amino-2-oxopropyl phosphate (1-amino-acetone-3-phosphate or AAP) to form pyridoxine 5'-phosphate (PNP) and inorganic phosphate. This Rhodopseudomonas palustris (strain HaA2) protein is Pyridoxine 5'-phosphate synthase.